Here is a 98-residue protein sequence, read N- to C-terminus: MKVGLKMLHDQVLIRPHEEKDGAGGIYIPDSAKKKPTMGLVVAVGAGAKNSNGTFQPVCVKEGDIVLYRKWAGSEVEHDGVEYVVMKETDIIAIKEGK.

The protein belongs to the GroES chaperonin family. Heptamer of 7 subunits arranged in a ring. Interacts with the chaperonin GroEL.

The protein localises to the cytoplasm. Its function is as follows. Together with the chaperonin GroEL, plays an essential role in assisting protein folding. The GroEL-GroES system forms a nano-cage that allows encapsulation of the non-native substrate proteins and provides a physical environment optimized to promote and accelerate protein folding. GroES binds to the apical surface of the GroEL ring, thereby capping the opening of the GroEL channel. This is Co-chaperonin GroES from Neorickettsia sennetsu (strain ATCC VR-367 / Miyayama) (Ehrlichia sennetsu).